The following is a 352-amino-acid chain: Gamma-aminobutyric acid-binding protein (352 aa).

An N-terminal signal peptide occupies residues 1-28 (MFKSLHQYAHVFSRLSLFGLAFAAAAQA).

The protein belongs to the bacterial solute-binding protein 1 family.

The protein resides in the periplasm. Binds specifically gamma-aminobutyric acid (GABA) with nanomolar affinity. Does not bind structurally related compounds such as 4-aminovaleric acid, spermidine, histamine and butyric acid. In Pseudomonas aeruginosa (strain ATCC 15692 / DSM 22644 / CIP 104116 / JCM 14847 / LMG 12228 / 1C / PRS 101 / PAO1), this protein is Gamma-aminobutyric acid-binding protein.